The primary structure comprises 162 residues: Nucleotide-binding protein ACIAD3137 (162 aa).

The protein belongs to the YajQ family.

Its function is as follows. Nucleotide-binding protein. The polypeptide is Nucleotide-binding protein ACIAD3137 (Acinetobacter baylyi (strain ATCC 33305 / BD413 / ADP1)).